Consider the following 597-residue polypeptide: Inactive metallocarboxypeptidase ECM14 (597 aa).

A signal peptide spans 1-21 (MRLFTHGQVLALLAFVNTISA). The propeptide occupies 22 to 174 (TPSFSTNSYP…QTIYESYPSP (153 aa)). The span at 170 to 179 (SYPSPSQSPS) shows a compositional bias: low complexity. Residues 170–189 (SYPSPSQSPSGRERGFLPSG) are disordered. Residues 202 to 522 (NYQPLSVIVP…NAVMMLGRFL (321 aa)) form the Peptidase M14 domain. Residues histidine 264 and glutamate 267 each coordinate Zn(2+). Residues 264 to 267 (HARE), arginine 322, and 339 to 340 (DR) each bind substrate. Cysteines 333 and 356 form a disulfide. N-linked (GlcNAc...) asparagine glycosylation occurs at asparagine 349. Residue histidine 396 coordinates Zn(2+). 397–398 (SY) provides a ligand contact to substrate. Positions 543 to 597 (KDDKPILNDDDDDDADTNDDGIGRKDDSWIPDEYKGDNDRDESDGGWAFRRLRKR) are disordered. Over residues 550–561 (NDDDDDDADTND) the composition is skewed to acidic residues. A compositionally biased stretch (basic and acidic residues) spans 563-580 (GIGRKDDSWIPDEYKGDN).

The protein belongs to the peptidase M14 family. Zn(2+) serves as cofactor.

It is found in the vacuole. It localises to the secreted. Inactive carboxypeptidase that may play a role in cell wall organization and biogenesis. This Ajellomyces capsulatus (strain G186AR / H82 / ATCC MYA-2454 / RMSCC 2432) (Darling's disease fungus) protein is Inactive metallocarboxypeptidase ECM14 (ECM14).